The sequence spans 256 residues: F-actin-capping protein subunit beta (256 aa).

Position 1 is an N-acetylmethionine (Met-1).

Belongs to the F-actin-capping protein beta subunit family. Component of the F-actin capping complex, composed of a heterodimer of an alpha and a beta subunit.

The protein localises to the cytoplasm. It localises to the cytoskeleton. Its function is as follows. F-actin-capping proteins bind in a Ca(2+)-independent manner to the fast growing ends of actin filaments (barbed end) thereby blocking the exchange of subunits at these ends. Unlike other capping proteins (such as gelsolin and severin), these proteins do not sever actin filaments. The protein is F-actin-capping protein subunit beta of Arabidopsis thaliana (Mouse-ear cress).